The chain runs to 829 residues: High affinity cAMP-specific and IBMX-insensitive 3',5'-cyclic phosphodiesterase 8A (829 aa).

The disordered stretch occupies residues 16–46 (EDAPSPAAPPLSSGGPRLPQGQKTAALPRTR). S20 bears the Phosphoserine mark. The region spanning 213 to 283 (ACNSVFTALE…DTINSCIRIG (71 aa)) is the PAS domain. The PAC domain occupies 287–329 (QGIYYAKKKNGDNIQQNVKIIPVIGQGGKIRHYVSIIRVCNGN). The tract at residues 341 to 360 (SDTHTDNQTGKHKDRRKGSL) is disordered. Position 359 is a phosphoserine; by PKA (S359). Residues S386 and S457 each carry the phosphoserine modification. Residues 454 to 461 (RRLSGNEY) form an involved in RAF1-binding region. Y461 carries the post-translational modification Phosphotyrosine. The 341-residue stretch at 480–820 (SLDDVPPRIA…KYWKGLDEMK (341 aa)) folds into the PDEase domain. H556 functions as the Proton donor in the catalytic mechanism. A divalent metal cation is bound by residues H560, H596, D597, and D726.

It belongs to the cyclic nucleotide phosphodiesterase family. PDE8 subfamily. As to quaternary structure, interacts with RAF1. The interaction promotes RAF1 activity. A divalent metal cation is required as a cofactor. In terms of processing, phosphorylated at Ser-359 by PKA under elevated cAMP conditions, this enhances catalytic activity. As to expression, expressed in most tissues except thymus and peripheral blood leukocytes. Highest levels in testis, ovary, small intestine and colon.

The enzyme catalyses 3',5'-cyclic AMP + H2O = AMP + H(+). The protein operates within purine metabolism; 3',5'-cyclic AMP degradation; AMP from 3',5'-cyclic AMP: step 1/1. With respect to regulation, inhibited by dipyridimole. Insensitive to selective PDE inhibitors including rolipram and zaprinast as well as to the non-selective inhibitor, IBMX. Unaffected by cGMP. Its function is as follows. Hydrolyzes the second messenger cAMP, which is a key regulator of many important physiological processes. May be involved in maintaining basal levels of the cyclic nucleotide and/or in the cAMP regulation of germ cell development. Binding to RAF1 reduces RAF1 'Ser-259' inhibitory-phosphorylation and stimulates RAF1-dependent EGF-activated ERK-signaling. Protects against cell death induced by hydrogen peroxide and staurosporine. This chain is High affinity cAMP-specific and IBMX-insensitive 3',5'-cyclic phosphodiesterase 8A (PDE8A), found in Homo sapiens (Human).